A 171-amino-acid polypeptide reads, in one-letter code: ATP synthase subunit b (171 aa).

Residues 13–33 (GVEWGTTFVTLVTFVILIILL) traverse the membrane as a helical segment.

This sequence belongs to the ATPase B chain family. As to quaternary structure, F-type ATPases have 2 components, F(1) - the catalytic core - and F(0) - the membrane proton channel. F(1) has five subunits: alpha(3), beta(3), gamma(1), delta(1), epsilon(1). F(0) has three main subunits: a(1), b(2) and c(10-14). The alpha and beta chains form an alternating ring which encloses part of the gamma chain. F(1) is attached to F(0) by a central stalk formed by the gamma and epsilon chains, while a peripheral stalk is formed by the delta and b chains.

It localises to the cell membrane. Its function is as follows. F(1)F(0) ATP synthase produces ATP from ADP in the presence of a proton or sodium gradient. F-type ATPases consist of two structural domains, F(1) containing the extramembraneous catalytic core and F(0) containing the membrane proton channel, linked together by a central stalk and a peripheral stalk. During catalysis, ATP synthesis in the catalytic domain of F(1) is coupled via a rotary mechanism of the central stalk subunits to proton translocation. Component of the F(0) channel, it forms part of the peripheral stalk, linking F(1) to F(0). This chain is ATP synthase subunit b, found in Staphylococcus epidermidis (strain ATCC 12228 / FDA PCI 1200).